The following is a 701-amino-acid chain: 1,4-alpha-glucan branching enzyme GlgB (701 aa).

Asp-381 acts as the Nucleophile in catalysis. Catalysis depends on Glu-434, which acts as the Proton donor.

The protein belongs to the glycosyl hydrolase 13 family. GlgB subfamily. In terms of assembly, monomer.

It catalyses the reaction Transfers a segment of a (1-&gt;4)-alpha-D-glucan chain to a primary hydroxy group in a similar glucan chain.. Its pathway is glycan biosynthesis; glycogen biosynthesis. In terms of biological role, catalyzes the formation of the alpha-1,6-glucosidic linkages in glycogen by scission of a 1,4-alpha-linked oligosaccharide from growing alpha-1,4-glucan chains and the subsequent attachment of the oligosaccharide to the alpha-1,6 position. This chain is 1,4-alpha-glucan branching enzyme GlgB, found in Jannaschia sp. (strain CCS1).